We begin with the raw amino-acid sequence, 204 residues long: Large ribosomal subunit protein eL15 (204 aa).

It belongs to the eukaryotic ribosomal protein eL15 family. In terms of assembly, component of the large ribosomal subunit.

It localises to the cytoplasm. Component of the large ribosomal subunit. The ribosome is a large ribonucleoprotein complex responsible for the synthesis of proteins in the cell. This Siniperca knerii (Big-eye mandarin fish) protein is Large ribosomal subunit protein eL15 (rpl15).